A 174-amino-acid polypeptide reads, in one-letter code: Ribosome maturation factor RimM (174 aa).

One can recognise a PRC barrel domain in the interval 96–169; it reads EPDTYYDHQL…ILEIDPPDGL (74 aa).

Belongs to the RimM family. As to quaternary structure, binds ribosomal protein uS19.

The protein localises to the cytoplasm. In terms of biological role, an accessory protein needed during the final step in the assembly of 30S ribosomal subunit, possibly for assembly of the head region. Essential for efficient processing of 16S rRNA. May be needed both before and after RbfA during the maturation of 16S rRNA. It has affinity for free ribosomal 30S subunits but not for 70S ribosomes. In Mycobacterium marinum (strain ATCC BAA-535 / M), this protein is Ribosome maturation factor RimM.